We begin with the raw amino-acid sequence, 156 residues long: Small ribosomal subunit protein uS7 (156 aa).

It belongs to the universal ribosomal protein uS7 family. Part of the 30S ribosomal subunit. Contacts proteins S9 and S11.

Its function is as follows. One of the primary rRNA binding proteins, it binds directly to 16S rRNA where it nucleates assembly of the head domain of the 30S subunit. Is located at the subunit interface close to the decoding center, probably blocks exit of the E-site tRNA. The chain is Small ribosomal subunit protein uS7 from Lactobacillus helveticus (strain DPC 4571).